The following is a 283-amino-acid chain: MAAAPQAPGRGSLRKTRPLVVKTSLNNPYIIRWSALESEDMHFILQTLEDRLKAIGLQKIEDKKKKNKTPFLKKESREKCSIAVDISENLKEKKTDAKQQVSGWTPAHVRKQLAIGVNEVTRALERRELLLVLVCKSVKPAMITSHLIQLSLSRSVPACQVPRLSERIAPVIGLKCVLALAFKKNTTDFVDEVRAIIPRVPSLSVPWLQDRIEDSGENLETEPLESQDRELLDTSFEDLSKPKRKLADGRQASVTLQPLKIKKLIPNPNKIRKPPKSKKATPK.

At Ala-2 the chain carries N-acetylalanine. Ser-12, Ser-226, and Ser-235 each carry phosphoserine.

It belongs to the eukaryotic ribosomal protein eL8 family. Component of nuclear RNase P and RNase MRP ribonucleoproteins. RNase P consists of a catalytic RNA moiety and about 10 protein subunits; POP1, POP4, POP5, POP7, RPP14, RPP21, RPP25, RPP30, RPP38 and RPP40. Within the RNase P complex, POP1, POP7 and RPP25 form the 'finger' subcomplex, POP5, RPP14, RPP40 and homodimeric RPP30 form the 'palm' subcomplex, and RPP21, POP4 and RPP38 form the 'wrist' subcomplex. All subunits of the RNase P complex interact with the catalytic RNA. Several subunits of RNase P are also part of the RNase MRP complex. RNase MRP consists of a catalytic RNA moiety and about 8 protein subunits; POP1, POP7, RPP25, RPP30, RPP38, RPP40 and possibly also POP4 and POP5.

It localises to the nucleus. Its subcellular location is the nucleolus. Component of ribonuclease P, a ribonucleoprotein complex that generates mature tRNA molecules by cleaving their 5'-ends. Also a component of the MRP ribonuclease complex, which cleaves pre-rRNA sequences. In Homo sapiens (Human), this protein is Ribonuclease P protein subunit p38 (RPP38).